A 635-amino-acid polypeptide reads, in one-letter code: Two-component response regulator ARR18 (635 aa).

Residues 19 to 133 form the Response regulatory domain; the sequence is RVLAVDDNPT…ELQNIWHHVV (115 aa). D70 carries the post-translational modification 4-aspartylphosphate. Disordered regions lie at residues 144-196 and 323-342; these read LPPS…KKPR and IQQG…GTYH. The span at 166 to 186 shows a compositional bias: acidic residues; sequence SGDEDDSDREEDDGEGSEQDG. The Nuclear localization signal signature appears at 193 to 196; the sequence is KKPR. Residues 196 to 246 constitute a DNA-binding region (myb-like GARP); the sequence is RVVWSQELHQKFVSAVQQLGLDKAVPKKILDLMSIEGLTRENVASHLQKYR.

Belongs to the ARR family. Type-B subfamily. Binds the target DNA as a monomer. In terms of processing, two-component system major event consists of a His-to-Asp phosphorelay between a sensor histidine kinase (HK) and a response regulator (RR). In plants, the His-to-Asp phosphorelay involves an additional intermediate named Histidine-containing phosphotransfer protein (HPt). This multistep phosphorelay consists of a His-Asp-His-Asp sequential transfer of a phosphate group between first a His and an Asp of the HK protein, followed by the transfer to a conserved His of the HPt protein and finally the transfer to an Asp in the receiver domain of the RR protein. In terms of tissue distribution, predominantly expressed in young leaf tissue developing anthers, and siliques.

The protein localises to the nucleus. Its function is as follows. Transcriptional activator that binds specifically to the DNA sequence 5'-[AG]GATT-3'. Functions as a response regulator involved in His-to-Asp phosphorelay signal transduction system. Phosphorylation of the Asp residue in the receiver domain activates the ability of the protein to promote the transcription of target genes. Could directly activate some type-A response regulators in response to cytokinins. The polypeptide is Two-component response regulator ARR18 (ARR18) (Arabidopsis thaliana (Mouse-ear cress)).